A 341-amino-acid chain; its full sequence is L-threonine 3-dehydrogenase (341 aa).

Cys38 is a Zn(2+) binding site. Active-site charge relay system residues include Thr40 and His43. Zn(2+) contacts are provided by His63, Glu64, Cys93, Cys96, Cys99, and Cys107. Residues Ile175, Asp195, Arg200, 262–264 (LGI), and 286–287 (IY) contribute to the NAD(+) site.

Belongs to the zinc-containing alcohol dehydrogenase family. In terms of assembly, homotetramer. It depends on Zn(2+) as a cofactor.

Its subcellular location is the cytoplasm. It catalyses the reaction L-threonine + NAD(+) = (2S)-2-amino-3-oxobutanoate + NADH + H(+). It participates in amino-acid degradation; L-threonine degradation via oxydo-reductase pathway; glycine from L-threonine: step 1/2. Functionally, catalyzes the NAD(+)-dependent oxidation of L-threonine to 2-amino-3-ketobutyrate. The chain is L-threonine 3-dehydrogenase from Shigella boydii serotype 4 (strain Sb227).